Here is a 262-residue protein sequence, read N- to C-terminus: Indole-3-glycerol phosphate synthase (262 aa).

The protein belongs to the TrpC family.

The enzyme catalyses 1-(2-carboxyphenylamino)-1-deoxy-D-ribulose 5-phosphate + H(+) = (1S,2R)-1-C-(indol-3-yl)glycerol 3-phosphate + CO2 + H2O. Its pathway is amino-acid biosynthesis; L-tryptophan biosynthesis; L-tryptophan from chorismate: step 4/5. This chain is Indole-3-glycerol phosphate synthase, found in Staphylococcus epidermidis (strain ATCC 35984 / DSM 28319 / BCRC 17069 / CCUG 31568 / BM 3577 / RP62A).